The primary structure comprises 710 residues: Polyribonucleotide nucleotidyltransferase (710 aa).

The Mg(2+) site is built by Asp485 and Asp491. Positions 552-611 constitute a KH domain; the sequence is PKILTLTINPDKIRDVIGPSGKVINKIIEETGVKIDIEQDGTVYISSLDTAMNQKAKQII. The S1 motif domain maps to 621-689; it reads GETYHGKVKR…NQGRVNLSRK (69 aa).

This sequence belongs to the polyribonucleotide nucleotidyltransferase family. Requires Mg(2+) as cofactor.

It localises to the cytoplasm. It catalyses the reaction RNA(n+1) + phosphate = RNA(n) + a ribonucleoside 5'-diphosphate. Involved in mRNA degradation. Catalyzes the phosphorolysis of single-stranded polyribonucleotides processively in the 3'- to 5'-direction. This chain is Polyribonucleotide nucleotidyltransferase, found in Shouchella clausii (strain KSM-K16) (Alkalihalobacillus clausii).